We begin with the raw amino-acid sequence, 467 residues long: Glycosyl hydrolase family 109 protein 1 (467 aa).

An N-terminal signal peptide occupies residues methionine 1–alanine 22. Residues methionine 66–arginine 67, aspartate 88, tryptophan 137–histidine 140, glutamate 157–valine 158, and asparagine 186 contribute to the NAD(+) site. Residues tyrosine 215, arginine 231, tyrosine 243–histidine 246, and tyrosine 321 contribute to the substrate site. An NAD(+)-binding site is contributed by tyrosine 243.

This sequence belongs to the Gfo/Idh/MocA family. Glycosyl hydrolase 109 subfamily. NAD(+) is required as a cofactor.

In terms of biological role, glycosidase. The protein is Glycosyl hydrolase family 109 protein 1 of Bacteroides thetaiotaomicron (strain ATCC 29148 / DSM 2079 / JCM 5827 / CCUG 10774 / NCTC 10582 / VPI-5482 / E50).